A 940-amino-acid polypeptide reads, in one-letter code: UvrABC system protein A (940 aa).

Gly31–Ser38 is a binding site for ATP. Residues Cys252–Cys279 form a C4-type zinc finger. ABC transporter domains are found at residues Trp309–Leu586 and Lys606–Lys936. Gly639 to Ser646 lines the ATP pocket. The segment at Cys739–Cys765 adopts a C4-type zinc-finger fold.

This sequence belongs to the ABC transporter superfamily. UvrA family. Forms a heterotetramer with UvrB during the search for lesions.

The protein localises to the cytoplasm. The UvrABC repair system catalyzes the recognition and processing of DNA lesions. UvrA is an ATPase and a DNA-binding protein. A damage recognition complex composed of 2 UvrA and 2 UvrB subunits scans DNA for abnormalities. When the presence of a lesion has been verified by UvrB, the UvrA molecules dissociate. This is UvrABC system protein A from Vibrio cholerae serotype O1 (strain ATCC 39315 / El Tor Inaba N16961).